Consider the following 397-residue polypeptide: MEDYNNQMDHESSGGRGNFLYASPNLGGNYGRAASDHQMGINTFHLQSSGGGGGGGSGDQCNFQSPGTHPINVKTEATTSQHGHQKFQYNNNNNSHLVSSSRGHQPVIHQLQNNFDLLNDDHSLSSNEVEAIKAKIIAHPQYSNLLEAYMDCQRVGAPSDVVARLSVARQEFEARQRSSGTSRETSKDPELDQFMEAYYDMLVKYREELTRPIQEAMDFMRRIETQLNMLGNNNNAPPLRIFSPSEDKCEGIGSSEEEQENSGGETEVPEIDPRAEDRELKNHLLRKYSGYLSSLKQELSKKKKKGKLPKDARQKLLSWWELHYKWPYPSESEKVALAESTGLDQKQINNWFINQRKRHWKPSEDMQFMVMDGLHPQNAALYMDGHYIGDGHYRLGP.

Disordered stretches follow at residues 43–68 (TFHLQSSGGGGGGGSGDQCNFQSPGT), 172–191 (FEARQRSSGTSRETSKDPEL), and 233–276 (NNNA…PRAE). The segment covering 49 to 58 (SGGGGGGGSG) has biased composition (gly residues). Residues 279–299 (ELKNHLLRKYSGYLSSLKQEL) form the ELK domain. The homeobox; TALE-type DNA-binding region spans 300–363 (SKKKKKGKLP…NQRKRHWKPS (64 aa)).

This sequence belongs to the TALE/KNOX homeobox family. As to expression, expressed only in the stems.

Its subcellular location is the nucleus. In terms of biological role, probably binds to the DNA sequence 5'-TGAC-3'. This Malus domestica (Apple) protein is Homeobox protein knotted-1-like 2.